A 692-amino-acid polypeptide reads, in one-letter code: Protein adenylyltransferase SelO-1, mitochondrial (692 aa).

The transit peptide at 1 to 24 directs the protein to the mitochondrion; that stretch reads MASVGSRLTRFYISRPGVIARRFL. Positions 142, 144, 176, 188, 189, 246, and 253 each coordinate ATP. Catalysis depends on D337, which acts as the Proton acceptor. Mg(2+) is bound by residues N338 and D347. An ATP-binding site is contributed by D347. The tract at residues 637-676 is disordered; the sequence is LEQPGWMGRGGAAIPGERDETEEEGSNSSGAGARGLVPYD. U690 is a non-standard amino acid (selenocysteine).

This sequence belongs to the SELO family. Requires Mg(2+) as cofactor.

The protein localises to the mitochondrion. It carries out the reaction L-tyrosyl-[protein] + ATP = O-(5'-adenylyl)-L-tyrosyl-[protein] + diphosphate. The catalysed reaction is L-threonyl-[protein] + ATP = 3-O-(5'-adenylyl)-L-threonyl-[protein] + diphosphate. The enzyme catalyses L-seryl-[protein] + ATP = 3-O-(5'-adenylyl)-L-seryl-[protein] + diphosphate. Its function is as follows. Catalyzes the transfer of adenosine 5'-monophosphate (AMP) to Ser, Thr and Tyr residues of target proteins (AMPylation). May be a redox-active mitochondrial selenoprotein which interacts with a redox target protein. In Danio rerio (Zebrafish), this protein is Protein adenylyltransferase SelO-1, mitochondrial.